Reading from the N-terminus, the 399-residue chain is MARKNAQAEDLSNVEFETSEDVEVIPTFNAMNLKEELLRGIYAYGFEKPSAIQQRSITPIVKGRDVIAQAQSGTGKTATFSISILQSLDTTLRETQVLCLSPTRELAVQIQKVILALGDMMNVQCHVCIGGTNLGEDIRKLDYGQHIVSGTPGRVFDMIKRRVLRTRAIKMLVLDEADEMLNKGFKEQIYDVYRYLPPATQVVLISATLPHEILEMTSKFMTDPIRILVKRDELTLEGIKQFFVAVEREEWKFDTLCDLYDTLTITQAVIFCNTKRKVDWLTEKMREANFTVSSMHGDMPQKERDEIMKEFRAGQSRVLITTDVWARGIDVQQVSLVINYDLPNNRELYIHRIGRSGRFGRKGVAINFVKSDDIRILRDIEQYYSTQIDEMPMNVADLI.

The Q motif signature appears at 26 to 54; the sequence is PTFNAMNLKEELLRGIYAYGFEKPSAIQQ. Positions 57 to 227 constitute a Helicase ATP-binding domain; the sequence is ITPIVKGRDV…SKFMTDPIRI (171 aa). 70–77 lines the ATP pocket; it reads AQSGTGKT. A DEAD box motif is present at residues 175 to 178; that stretch reads DEAD. The 162-residue stretch at 238 to 399 folds into the Helicase C-terminal domain; that stretch reads GIKQFFVAVE…EMPMNVADLI (162 aa).

Belongs to the DEAD box helicase family. In terms of assembly, part of the mRNA splicing-dependent exon junction complex (EJC) complex; the core complex contains btz/CASC3, eIF4AIII, mago and tsu/RBM8A. Interacts with btz/CASC3 and mago. Interacts with ncm/CWC22.

The protein resides in the nucleus. It catalyses the reaction ATP + H2O = ADP + phosphate + H(+). Functionally, ATP-dependent RNA helicase. Core component of the splicing-dependent multiprotein exon junction complex (EJC) deposited at splice junctions on mRNAs. Involved in exon definition of genes containing long introns, including the rolled/MAPK gene. Has a role in oskar mRNA localization at the posterior pole of the developing oocyte. This is Eukaryotic initiation factor 4A-III from Drosophila melanogaster (Fruit fly).